Reading from the N-terminus, the 159-residue chain is NADH-quinone oxidoreductase subunit I (159 aa).

4Fe-4S ferredoxin-type domains lie at Arg-51–Asp-80 and Thr-90–Asn-119. Residues Cys-60, Cys-63, Cys-66, Cys-70, Cys-99, Cys-102, Cys-105, and Cys-109 each contribute to the [4Fe-4S] cluster site.

The protein belongs to the complex I 23 kDa subunit family. As to quaternary structure, NDH-1 is composed of 14 different subunits. Subunits NuoA, H, J, K, L, M, N constitute the membrane sector of the complex. [4Fe-4S] cluster is required as a cofactor.

Its subcellular location is the cell inner membrane. The enzyme catalyses a quinone + NADH + 5 H(+)(in) = a quinol + NAD(+) + 4 H(+)(out). Its function is as follows. NDH-1 shuttles electrons from NADH, via FMN and iron-sulfur (Fe-S) centers, to quinones in the respiratory chain. The immediate electron acceptor for the enzyme in this species is believed to be ubiquinone. Couples the redox reaction to proton translocation (for every two electrons transferred, four hydrogen ions are translocated across the cytoplasmic membrane), and thus conserves the redox energy in a proton gradient. The chain is NADH-quinone oxidoreductase subunit I from Rickettsia akari (strain Hartford).